Consider the following 319-residue polypeptide: Lipooligosaccharide heptosyltransferase 2 (319 aa).

It belongs to the glycosyltransferase 9 family.

The enzyme catalyses an L-alpha-D-Hep-(1-&gt;5)-[alpha-Kdo-(2-&gt;4)]-alpha-Kdo-(2-&gt;6)-lipid A + ADP-L-glycero-beta-D-manno-heptose = an L-alpha-D-Hep-(1-&gt;3)-L-alpha-D-Hep-(1-&gt;5)-[alpha-Kdo-(2-&gt;4)]-alpha-Kdo-(2-&gt;6)-lipid A + ADP + H(+). Its pathway is bacterial outer membrane biogenesis; LOS core biosynthesis. In terms of biological role, glycosyltransferase involved in the biosynthesis of the core oligosaccharide region of lipooligosaccharide (LOS). Catalyzes the addition of the second heptose unit to the heptosyl-Kdo2-lipid A module. This is Lipooligosaccharide heptosyltransferase 2 from Campylobacter jejuni subsp. jejuni serotype O:2 (strain ATCC 700819 / NCTC 11168).